A 984-amino-acid chain; its full sequence is Serine/threonine-protein kinase N2 (984 aa).

Position 21 is a phosphoserine (Ser-21). Residues 33–109 (KLDFSDTMVQ…LQELNAHIVV (77 aa)) enclose the REM-1 1 domain. Lys-77 bears the N6-acetyllysine mark. Ser-110 is subject to Phosphoserine. The disordered stretch occupies residues 114 to 133 (DITDCPRTPDTPNNDPRCST). Phosphothreonine is present on residues Thr-121 and Thr-124. REM-1 domains lie at 121–203 (TPDT…TNEL) and 204–284 (AFDN…EVPK). Polar residues predominate over residues 123 to 133 (DTPNNDPRCST). 4 positions are modified to phosphoserine: Ser-302, Ser-306, Ser-360, and Ser-362. Residues 351–383 (ATSVALPGWSPSETRSSFMSRTSKSKSGSSRNL) form a disordered region. The region spanning 353–473 (SVALPGWSPS…LYLEPQGTLF (121 aa)) is the C2 domain. Residues 364–381 (TRSSFMSRTSKSKSGSSR) show a composition bias toward low complexity. Positions 382–463 (NLLKTDDLSN…FLDNQRHGMC (82 aa)) are necessary to rescue apical junction formation. Ser-535, Ser-583, and Ser-620 each carry phosphoserine. The segment at 558-584 (ASDSTVTKLDFDLEPEPPPAPPRASSL) is disordered. Thr-628 carries the phosphothreonine modification. Position 631 is a phosphoserine (Ser-631). Residues 657–916 (FRCCAVLGRG…AEDVKKHPFF (260 aa)) enclose the Protein kinase domain. Residues 663-671 (LGRGHFGKV) and Lys-686 contribute to the ATP site. The active-site Proton acceptor is the Asp-782. At Thr-816 the chain carries Phosphothreonine; by PDPK1. Residues 917 to 977 (RLIDWSALMD…EEEQEMFRDF (61 aa)) form a necessary for the catalytic activity region. Residues 917 to 984 (RLIDWSALMD…RDFDYIADWC (68 aa)) form the AGC-kinase C-terminal domain. At Ser-952 the chain carries Phosphoserine. Position 958 is a phosphothreonine (Thr-958). The segment at 978–984 (DYIADWC) is negatively regulates the responsiveness of the catalytic activity by cardiolipin and is required for optimal activation by the GTP-bound RhoA.

Belongs to the protein kinase superfamily. AGC Ser/Thr protein kinase family. PKC subfamily. Interacts (via the REM repeats) with RHOA (GTP-bound form preferentially) and interacts (via the REM repeats) with RAC1 (GTP-bound form preferentially); the interactions induce its autophosphorylation. Interacts with RHOC. Interacts with NCK1 and NCK2. Interacts with NCK1 (via SH3 domains). Interacts with CD44. Interacts (via C-terminal kinase domain) with PDPK1; the interaction stimulates PDPK1 kinase activity. Interacts with MAP3K2; the interaction activates PRK2 kinase activity in a MAP3K2-independent kinase activity. Interacts (via C-terminal domain) with AKT1; the interaction occurs with the C-terminal cleavage product of PRK2 in apoptotic cells. Interacts (via C-terminus) with PTPN13 (via PDZ 3 domain). Interacts with CDK10. As to quaternary structure, (Microbial infection) Interacts with HCV NS5B (via N-terminal finger domain). Autophosphorylated. Phosphorylated during mitosis. Phosphorylated by CDK10. Post-translationally, activated by limited proteolysis with trypsin. Proteolytically cleaved by caspase-3 during the induction of apoptotic cell death. In terms of tissue distribution, ubiquitous. Expressed in numerous tumor cell lines, especially in bladder tumor cells.

Its subcellular location is the cytoplasm. It localises to the nucleus. The protein resides in the membrane. The protein localises to the cell projection. It is found in the lamellipodium. Its subcellular location is the cytoskeleton. It localises to the cleavage furrow. The protein resides in the midbody. The protein localises to the cell junction. It carries out the reaction L-seryl-[protein] + ATP = O-phospho-L-seryl-[protein] + ADP + H(+). The enzyme catalyses L-threonyl-[protein] + ATP = O-phospho-L-threonyl-[protein] + ADP + H(+). With respect to regulation, kinase activity is activated upon binding to GTP-bound Rhoa/Rac1 GTPases. Activated by caspase-3 (CASP3) cleavage during apoptosis. Activated by lipids, particularly cardiolipin and to a lesser extent by other acidic phospholipids and unsaturated fatty acids. Two specific sites, Thr-816 (activation loop of the kinase domain) and Thr-958 (turn motif), need to be phosphorylated for its full activation. In terms of biological role, PKC-related serine/threonine-protein kinase and Rho/Rac effector protein that participates in specific signal transduction responses in the cell. Plays a role in the regulation of cell cycle progression, actin cytoskeleton assembly, cell migration, cell adhesion, tumor cell invasion and transcription activation signaling processes. Phosphorylates CTTN in hyaluronan-induced astrocytes and hence decreases CTTN ability to associate with filamentous actin. Phosphorylates HDAC5, therefore lead to impair HDAC5 import. Direct RhoA target required for the regulation of the maturation of primordial junctions into apical junction formation in bronchial epithelial cells. Required for G2/M phases of the cell cycle progression and abscission during cytokinesis in a ECT2-dependent manner. Stimulates FYN kinase activity that is required for establishment of skin cell-cell adhesion during keratinocytes differentiation. Regulates epithelial bladder cells speed and direction of movement during cell migration and tumor cell invasion. Inhibits Akt pro-survival-induced kinase activity. Mediates Rho protein-induced transcriptional activation via the c-fos serum response factor (SRF). Involved in the negative regulation of ciliogenesis. Its function is as follows. (Microbial infection) Phosphorylates HCV NS5B leading to stimulation of HCV RNA replication. The polypeptide is Serine/threonine-protein kinase N2 (PKN2) (Homo sapiens (Human)).